A 147-amino-acid polypeptide reads, in one-letter code: Large-conductance mechanosensitive channel (147 aa).

2 consecutive transmembrane segments (helical) span residues 14 to 34 (VVDM…VKSL) and 85 to 105 (FGLF…LFMI).

Belongs to the MscL family. As to quaternary structure, homopentamer.

The protein resides in the cell inner membrane. In terms of biological role, channel that opens in response to stretch forces in the membrane lipid bilayer. May participate in the regulation of osmotic pressure changes within the cell. The sequence is that of Large-conductance mechanosensitive channel from Tolumonas auensis (strain DSM 9187 / NBRC 110442 / TA 4).